A 273-amino-acid polypeptide reads, in one-letter code: Ribosomal RNA small subunit methyltransferase A (273 aa).

S-adenosyl-L-methionine-binding residues include asparagine 18, leucine 20, glycine 45, glutamate 66, aspartate 91, and asparagine 113.

It belongs to the class I-like SAM-binding methyltransferase superfamily. rRNA adenine N(6)-methyltransferase family. RsmA subfamily.

It localises to the cytoplasm. It catalyses the reaction adenosine(1518)/adenosine(1519) in 16S rRNA + 4 S-adenosyl-L-methionine = N(6)-dimethyladenosine(1518)/N(6)-dimethyladenosine(1519) in 16S rRNA + 4 S-adenosyl-L-homocysteine + 4 H(+). Functionally, specifically dimethylates two adjacent adenosines (A1518 and A1519) in the loop of a conserved hairpin near the 3'-end of 16S rRNA in the 30S particle. May play a critical role in biogenesis of 30S subunits. The sequence is that of Ribosomal RNA small subunit methyltransferase A from Escherichia coli O139:H28 (strain E24377A / ETEC).